Here is a 187-residue protein sequence, read N- to C-terminus: Protein GrpE (187 aa).

The disordered stretch occupies residues 1-23 (MADEQNLDAQAQDQAAEAGAGEE). Residues 7–23 (LDAQAQDQAAEAGAGEE) show a composition bias toward low complexity.

This sequence belongs to the GrpE family. In terms of assembly, homodimer.

Its subcellular location is the cytoplasm. Functionally, participates actively in the response to hyperosmotic and heat shock by preventing the aggregation of stress-denatured proteins, in association with DnaK and GrpE. It is the nucleotide exchange factor for DnaK and may function as a thermosensor. Unfolded proteins bind initially to DnaJ; upon interaction with the DnaJ-bound protein, DnaK hydrolyzes its bound ATP, resulting in the formation of a stable complex. GrpE releases ADP from DnaK; ATP binding to DnaK triggers the release of the substrate protein, thus completing the reaction cycle. Several rounds of ATP-dependent interactions between DnaJ, DnaK and GrpE are required for fully efficient folding. The protein is Protein GrpE of Pseudomonas savastanoi pv. phaseolicola (strain 1448A / Race 6) (Pseudomonas syringae pv. phaseolicola (strain 1448A / Race 6)).